Here is a 1025-residue protein sequence, read N- to C-terminus: Dihydropyrimidine dehydrogenase [NADP(+)] (1025 aa).

One can recognise a 4Fe-4S ferredoxin-type 1 domain in the interval 69 to 100 (ERGALREAMRCLKCADAPCQKSCPTNLDIKSF). [4Fe-4S] cluster contacts are provided by Cys-79, Cys-82, Cys-87, and Cys-91. FAD is bound at residue Val-129. [4Fe-4S] cluster contacts are provided by Cys-130, Cys-136, Cys-140, and Gln-156. FAD is bound by residues 194 to 198 (GAGPA), 218 to 226 (EKQEYVGGI), Arg-235, and Leu-261. NADP(+) contacts are provided by residues 340–343 (AGDT), 364–365 (RK), and Arg-371. At Lys-384 the chain carries N6-acetyllysine. Residues 437–439 (AFG) and 481–487 (DVVGIAN) each bind NADP(+). 480–489 (GDVVGIANTT) contributes to the FAD binding site. FMN is bound by residues Ser-550 and 574 to 575 (KT). Substrate contacts are provided by residues Asn-609 and 668–670 (NLS). The active-site Proton acceptor is the Cys-671. FMN is bound at residue Lys-709. 736 to 737 (NT) contributes to the substrate binding site. FMN-binding positions include Gly-767, 793–795 (TGG), and 816–817 (CS). 4Fe-4S ferredoxin-type domains follow at residues 944-976 (VVAV…FDPE) and 978-1007 (HLPT…MVSR). [4Fe-4S] cluster-binding residues include Cys-953, Cys-956, Cys-959, Cys-963, Cys-986, Cys-989, Cys-992, and Cys-996.

Belongs to the dihydropyrimidine dehydrogenase family. As to quaternary structure, homodimer. FAD serves as cofactor. The cofactor is FMN. [4Fe-4S] cluster is required as a cofactor.

It is found in the cytoplasm. It catalyses the reaction 5,6-dihydrouracil + NADP(+) = uracil + NADPH + H(+). The catalysed reaction is 5,6-dihydrothymine + NADP(+) = thymine + NADPH + H(+). Its pathway is amino-acid biosynthesis; beta-alanine biosynthesis. Inactivated by 5-iodouracil. Functionally, involved in pyrimidine base degradation. Catalyzes the reduction of uracil and thymine. Also involved the degradation of the chemotherapeutic drug 5-fluorouracil. In Bos taurus (Bovine), this protein is Dihydropyrimidine dehydrogenase [NADP(+)] (DPYD).